A 576-amino-acid polypeptide reads, in one-letter code: Arginine--tRNA ligase (576 aa).

The short motif at 126–136 (ANPTGPMHIGH) is the 'HIGH' region element.

This sequence belongs to the class-I aminoacyl-tRNA synthetase family. As to quaternary structure, monomer.

The protein localises to the cytoplasm. It catalyses the reaction tRNA(Arg) + L-arginine + ATP = L-arginyl-tRNA(Arg) + AMP + diphosphate. The sequence is that of Arginine--tRNA ligase from Rickettsia typhi (strain ATCC VR-144 / Wilmington).